Consider the following 463-residue polypeptide: L-2-hydroxyglutarate dehydrogenase, mitochondrial (463 aa).

The N-terminal 52 residues, 1–52, are a transit peptide targeting the mitochondrion; it reads MVPALRYLGSVCGRARGIFPGGFSAAHTPASGKSRLLCQGGRRASTSSFDIV. N6-acetyllysine is present on residues K104 and K173.

The protein belongs to the L2HGDH family. FAD serves as cofactor.

The protein localises to the mitochondrion. It catalyses the reaction (S)-2-hydroxyglutarate + A = 2-oxoglutarate + AH2. The chain is L-2-hydroxyglutarate dehydrogenase, mitochondrial (L2HGDH) from Bos taurus (Bovine).